We begin with the raw amino-acid sequence, 799 residues long: Oligopeptide transporter 1 (799 aa).

Disordered stretches follow at residues 1-26 (MSTI…PIQI) and 43-64 (DVNN…QKFD). Residues 1–108 (MSTIYRESDS…DPTIRLNHWR (108 aa)) are Extracellular-facing. Over residues 13-26 (SEPSPTPTTIPIQI) the composition is skewed to low complexity. Asparagine 46 carries N-linked (GlcNAc...) asparagine glycosylation. Phosphothreonine occurs at positions 48, 50, and 51. A helical membrane pass occupies residues 109–129 (TWFLTTVFVVVFAGVNQFFSL). Topologically, residues 130-135 (RYPSLE) are cytoplasmic. The helical transmembrane segment at 136-156 (INFLVAQVVCYPIGRILALLP) threads the bilayer. At 157–177 (DWKCSKVPFFDLNPGPFTKKE) the chain is on the extracellular side. A helical transmembrane segment spans residues 178–198 (HAVVTIAVALTSSTAYAMYIL). Residues 199-210 (NAQGSFYNMKLN) are Cytoplasmic-facing. A helical transmembrane segment spans residues 211 to 231 (VGYQFLLVWTSQMIGYGAAGL). The Extracellular segment spans residues 232–276 (TRRWVVNPASSIWPQTLISVSLFDSLHSRKVEKTVANGWTMPRYR). Residues 277 to 297 (FFLIVLIGSFIWYWVPGFLFT) traverse the membrane as a helical segment. Over 298–313 (GLSYFNVILWGSKTRH) the chain is Cytoplasmic. A helical transmembrane segment spans residues 314-334 (NFIANTIFGTQSGLGALPITF). The Extracellular portion of the chain corresponds to 335 to 359 (DYTQVSQAMSGSVFATPFYVSANTY). Residues 360 to 380 (ASVLIFFVIVLPCLYFTNTWY) traverse the membrane as a helical segment. The Cytoplasmic segment spans residues 381 to 428 (AKYMPVISGSTYDNTQNKYNVTKILNEDYSINLEKYKEYSPVFVPFSY). Residues 429–449 (LLSYALNFAAVIAVFVHCILY) form a helical membrane-spanning segment. Topologically, residues 450–482 (HGKDIVAKFKDRKNGGTDIHMRIYSKNYKDCPD) are extracellular. Residues 483–503 (WWYLLLQIVMIGLGFVAVCCF) form a helical membrane-spanning segment. Over 504–508 (DTKFP) the chain is Cytoplasmic. The chain crosses the membrane as a helical span at residues 509 to 529 (AWAFVIAILISLVNFIPQGIL). Over 530–540 (EAMTNQHVGLN) the chain is Extracellular. The helical transmembrane segment at 541 to 561 (IITELICGYMLPLRPMANLLF) threads the bilayer. Over 562–590 (KLYGFIVMRQGLNLSRDLKLAMYMKVSPR) the chain is Cytoplasmic. The chain crosses the membrane as a helical span at residues 591 to 611 (LIFAVQIYATIISGMVNVGVQ). At 612–659 (EWMMHNIDGLCTTDQPNGFTCANGRTVFNASIIWSLPKYLFSSGRIYN) the chain is on the extracellular side. Asparagine 640 is a glycosylation site (N-linked (GlcNAc...) asparagine). The helical transmembrane segment at 660-680 (PLMWFFLIGLLFPLAVYAVQW) threads the bilayer. The Cytoplasmic segment spans residues 681–736 (KFPKFKFAKHIHTPVFFTGPGNIPPSTPYNYSLFFAMSFCLNLIRKRWRAWFNKYN). Residues 737 to 757 (FVMGAGVEAGVAISVVIIFLC) form a helical membrane-spanning segment. Residues 758 to 799 (VQYPGGKLSWWGNNVWKRTYDNDYKKFYTLKKGETFGYDKWW) lie on the Extracellular side of the membrane.

Belongs to the oligopeptide OPT transporter family.

Its subcellular location is the cell membrane. Functionally, high affinity transporter for glutathione. Also transports tetra- and pentapeptides like the opioids leucine enkephalin (Tyr-Gly-Gly-Phe-Leu) and methionine enkephalin (Tyr-Gly-Gly_Phe-Met) across the cell membrane. This is Oligopeptide transporter 1 (OPT1) from Saccharomyces cerevisiae (strain ATCC 204508 / S288c) (Baker's yeast).